The following is a 537-amino-acid chain: Tyrosine-protein kinase Fyn (537 aa).

A lipid anchor (N-myristoyl glycine) is attached at Gly-2. S-palmitoyl cysteine attachment occurs at residues Cys-3 and Cys-6. Thr-12 carries the phosphothreonine; by PKC modification. Phosphoserine occurs at positions 21 and 26. The SH3 domain occupies 82–143 (TGVTLFVALY…PSNYVAPVDS (62 aa)). An SH2 domain is found at 149–246 (WYFGKLGRKD…GLCCRLVVPC (98 aa)). Tyr-185 carries the post-translational modification Phosphotyrosine. The Protein kinase domain occupies 271–524 (LQLIKRLGNG…YLQGFLEDYF (254 aa)). ATP contacts are provided by residues 277 to 285 (LGNGQFGEV) and Lys-299. Catalysis depends on Asp-390, which acts as the Proton acceptor. Position 420 is a phosphotyrosine; by autocatalysis (Tyr-420). Tyr-531 carries the post-translational modification Phosphotyrosine; by CSK.

The protein belongs to the protein kinase superfamily. Tyr protein kinase family. SRC subfamily. As to quaternary structure, interacts (via its SH3 domain) with PIK3R1 and PRMT8. Interacts with FYB1, PAG1, and SH2D1A. Interacts with CD79A (tyrosine-phosphorylated form); the interaction increases FYN activity. Interacts (via SH2 domain) with CSF1R (tyrosine phosphorylated). Interacts with TOM1L1 (phosphorylated form). Interacts with KDR (tyrosine phosphorylated). Interacts (via SH3 domain) with KLHL2 (via N-terminus). Interacts with SH2D1A and SLAMF1. Interacts with ITCH; the interaction phosphorylates ITCH and negatively regulates its activity. Interacts with FASLG. Interacts with RUNX3. Interacts with KIT. Interacts with EPHA8; possible downstream effector of EPHA8 in regulation of cell adhesion. Interacts with PTK2/FAK1; this interaction leads to PTK2/FAK1 phosphorylation and activation. Interacts with CAV1; this interaction couples integrins to the Ras-ERK pathway. Interacts with UNC119. Interacts (via SH2 domain) with PTPRH (phosphorylated form). Interacts with PTPRO (phosphorylated form). Interacts with PTPRB (phosphorylated form). Interacts with FYB2. Interacts with DSCAM. Interacts with SKAP1 and FYB1; this interaction promotes the phosphorylation of CLNK. Interacts with NEDD9; in the presence of PTK2. The cofactor is Mn(2+). Autophosphorylated at Tyr-420. Phosphorylation on the C-terminal tail at Tyr-531 by CSK maintains the enzyme in an inactive state. PTPRC/CD45 dephosphorylates Tyr-531 leading to activation. Ultraviolet B (UVB) strongly increase phosphorylation at Thr-12 and kinase activity, and promotes translocation from the cytoplasm to the nucleus. Dephosphorylation at Tyr-420 by PTPN2 negatively regulates T-cell receptor signaling. Phosphorylated at tyrosine residues, which can be enhanced by NTN1. In terms of processing, palmitoylated. Palmitoylation at Cys-3 and Cys-6, probably by ZDHHC21, regulates subcellular location.

The protein resides in the cytoplasm. It is found in the nucleus. Its subcellular location is the cell membrane. It localises to the perikaryon. It carries out the reaction L-tyrosyl-[protein] + ATP = O-phospho-L-tyrosyl-[protein] + ADP + H(+). With respect to regulation, inhibited by phosphorylation of Tyr-531 by leukocyte common antigen and activated by dephosphorylation of this site. Functionally, non-receptor tyrosine-protein kinase that plays a role in many biological processes including regulation of cell growth and survival, cell adhesion, integrin-mediated signaling, cytoskeletal remodeling, cell motility, immune response and axon guidance. Inactive FYN is phosphorylated on its C-terminal tail within the catalytic domain. Following activation by PKA, the protein subsequently associates with PTK2/FAK1, allowing PTK2/FAK1 phosphorylation, activation and targeting to focal adhesions. Involved in the regulation of cell adhesion and motility through phosphorylation of CTNNB1 (beta-catenin) and CTNND1 (delta-catenin). Regulates cytoskeletal remodeling by phosphorylating several proteins including the actin regulator WAS and the microtubule-associated proteins MAP2 and MAPT. Promotes cell survival by phosphorylating AGAP2/PIKE-A and preventing its apoptotic cleavage. Participates in signal transduction pathways that regulate the integrity of the glomerular slit diaphragm (an essential part of the glomerular filter of the kidney) by phosphorylating several slit diaphragm components including NPHS1, KIRREL1 and TRPC6. Plays a role in neural processes by phosphorylating DPYSL2, a multifunctional adapter protein within the central nervous system, ARHGAP32, a regulator for Rho family GTPases implicated in various neural functions, and SNCA, a small pre-synaptic protein. Involved in reelin signaling by mediating phosphorylation of DAB1 following reelin (RELN)-binding to its receptor. Participates in the downstream signaling pathways that lead to T-cell differentiation and proliferation following T-cell receptor (TCR) stimulation. Phosphorylates PTK2B/PYK2 in response to T-cell receptor activation. Also participates in negative feedback regulation of TCR signaling through phosphorylation of PAG1, thereby promoting interaction between PAG1 and CSK and recruitment of CSK to lipid rafts. CSK maintains LCK and FYN in an inactive form. Promotes CD28-induced phosphorylation of VAV1. In mast cells, phosphorylates CLNK after activation of immunoglobulin epsilon receptor signaling. Can also promote CD244-mediated NK cell activation. This chain is Tyrosine-protein kinase Fyn, found in Sus scrofa (Pig).